Consider the following 174-residue polypeptide: Calcineurin subunit B (174 aa).

EF-hand domains lie at 21–56 (EEIE…SSNP), 60–88 (RLMD…FSGK), 90–125 (SKLD…MVGK), and 131–166 (ELQQ…KSVA). The Ca(2+) site is built by Asp-34, Asp-36, Ser-38, Thr-40, Glu-45, Asp-66, Asp-68, Asn-70, Thr-72, Glu-77, Asp-103, Asp-105, Asp-107, Tyr-109, Glu-114, Asp-144, Asp-146, Asp-148, Arg-150, and Glu-155.

This sequence belongs to the calcineurin regulatory subunit family. In terms of assembly, composed of a catalytic subunit (A) and a regulatory subunit (B).

Its function is as follows. Regulatory subunit of calcineurin, a calcium-dependent, calmodulin stimulated protein phosphatase. Confers calcium sensitivity. This chain is Calcineurin subunit B (CNB1), found in Debaryomyces hansenii (strain ATCC 36239 / CBS 767 / BCRC 21394 / JCM 1990 / NBRC 0083 / IGC 2968) (Yeast).